The chain runs to 303 residues: MEMSSLLERITDQIAPLRGSGEVADYIPALARADPDRFGIAVAEVDGGVHGAGDWEAPFSMQSISKVFTLAMVLAEGDDTLWRRVGREPSGNPFNSLVQLEHERGIPRNPFINAGALAVTDQLISLTGDAVGNLLEFLRTESANPALPIDDEVAISERAHADRNLALAHFMASYGNMRNPVDDVIDQYVRQCSIAMSCHDLAEAGLLLARHGVRRDGSGYLSRSQAKRINAIMLTCGTYDAAGEFAYHVGIPGKSGVGGGILAIVPGRCAVAVWSPGLDRRGNSVAGVAALDHFTTLTGWSVF.

Residues Ser-63, Asn-113, Glu-157, Asn-164, Tyr-188, Tyr-239, and Val-257 each contribute to the substrate site.

The protein belongs to the glutaminase family. As to quaternary structure, homotetramer.

It catalyses the reaction L-glutamine + H2O = L-glutamate + NH4(+). The protein is Glutaminase of Saccharopolyspora erythraea (strain ATCC 11635 / DSM 40517 / JCM 4748 / NBRC 13426 / NCIMB 8594 / NRRL 2338).